Consider the following 124-residue polypeptide: Glutaredoxin-2 (124 aa).

Cysteine 13 and cysteine 16 form a disulfide bridge.

It belongs to the glutaredoxin family. As to quaternary structure, homodimer.

Its subcellular location is the host cytoplasm. Functionally, glutaredoxin necessary for virion morphogenesis and virus replication. Functions as a thiol-disulfide transfer protein between membrane-associated OPG128 and substrates OPG095 or OPG053. The complete pathway for formation of disulfide bonds in intracellular virion membrane proteins sequentially involves oxidation of OPG072, OPG128 and OPG088. Exhibit thioltransferase and dehydroascorbate reductase activities in vitro. This Camelus protein is Glutaredoxin-2 (OPG088).